Consider the following 481-residue polypeptide: Phenylalanine--tRNA ligase alpha subunit (481 aa).

L-phenylalanine is bound by residues T322, 361–363 (QLE), and Y401. Residue E403 coordinates Mg(2+). F426 is an L-phenylalanine binding site.

This sequence belongs to the class-II aminoacyl-tRNA synthetase family. Phe-tRNA synthetase alpha subunit type 2 subfamily. As to quaternary structure, tetramer of two alpha and two beta subunits. The cofactor is Mg(2+).

Its subcellular location is the cytoplasm. It carries out the reaction tRNA(Phe) + L-phenylalanine + ATP = L-phenylalanyl-tRNA(Phe) + AMP + diphosphate + H(+). The polypeptide is Phenylalanine--tRNA ligase alpha subunit (Methanoculleus marisnigri (strain ATCC 35101 / DSM 1498 / JR1)).